We begin with the raw amino-acid sequence, 865 residues long: LINE-1 type transposase domain-containing protein 1 (865 aa).

Ser-2 bears the N-acetylserine mark. Ser-2 is modified (phosphoserine). Residue Thr-149 is modified to Phosphothreonine. A Phosphoserine modification is found at Ser-154. Positions 370–508 (EMKNLETQEE…EKKASRRQKE (139 aa)) are disordered. Acidic residues-rich tracts occupy residues 376-440 (TQEE…EQTS) and 472-483 (SVEDSESEEEEE). Phosphoserine occurs at positions 472, 476, and 478. Residues 498–508 (TEKKASRRQKE) are compositionally biased toward basic and acidic residues. Residues Ser-518, Ser-561, and Ser-573 each carry the phosphoserine modification. Over residues 590–608 (EEKKHRTLHTEELTSKEAD) the composition is skewed to basic and acidic residues. The segment at 590 to 612 (EEKKHRTLHTEELTSKEADLTEE) is disordered. Ser-640, Ser-648, and Ser-665 each carry phosphoserine. Residues 642–684 (VLEIENSVDDLSSRMDILEERIDSLEDQIEEFSKDTMQMTKQI) are a coiled coil.

The protein belongs to the transposase 22 family.

The chain is LINE-1 type transposase domain-containing protein 1 (L1TD1) from Homo sapiens (Human).